The chain runs to 707 residues: Polyribonucleotide nucleotidyltransferase (707 aa).

Mg(2+)-binding residues include D485 and D491. The KH domain occupies 552–611 (PRIYTMKIDPKKIKDVIGKGGATIRTLTEETGTSIDIDDDGTVKIAAIDGNAVKEVMARI). The 69-residue stretch at 621–689 (GAVYTGKVTR…RQGRIRLTMK (69 aa)) folds into the S1 motif domain.

This sequence belongs to the polyribonucleotide nucleotidyltransferase family. As to quaternary structure, component of the RNA degradosome, which is a multiprotein complex involved in RNA processing and mRNA degradation. Mg(2+) is required as a cofactor.

The protein resides in the cytoplasm. It catalyses the reaction RNA(n+1) + phosphate = RNA(n) + a ribonucleoside 5'-diphosphate. Its function is as follows. Involved in mRNA degradation. Catalyzes the phosphorolysis of single-stranded polyribonucleotides processively in the 3'- to 5'-direction. The polypeptide is Polyribonucleotide nucleotidyltransferase (Actinobacillus succinogenes (strain ATCC 55618 / DSM 22257 / CCUG 43843 / 130Z)).